The primary structure comprises 273 residues: Dermonecrotic toxin LhSicTox-alphaIA2ai (273 aa).

Residue His5 is part of the active site. Mg(2+) is bound by residues Glu25 and Asp27. Catalysis depends on His41, which acts as the Nucleophile. Intrachain disulfides connect Cys45-Cys51 and Cys47-Cys190. Mg(2+) is bound at residue Asp85.

It belongs to the arthropod phospholipase D family. Class II subfamily. Mg(2+) is required as a cofactor. In terms of tissue distribution, expressed by the venom gland.

The protein resides in the secreted. It carries out the reaction an N-(acyl)-sphingosylphosphocholine = an N-(acyl)-sphingosyl-1,3-cyclic phosphate + choline. It catalyses the reaction an N-(acyl)-sphingosylphosphoethanolamine = an N-(acyl)-sphingosyl-1,3-cyclic phosphate + ethanolamine. The enzyme catalyses a 1-acyl-sn-glycero-3-phosphocholine = a 1-acyl-sn-glycero-2,3-cyclic phosphate + choline. The catalysed reaction is a 1-acyl-sn-glycero-3-phosphoethanolamine = a 1-acyl-sn-glycero-2,3-cyclic phosphate + ethanolamine. Functionally, dermonecrotic toxins cleave the phosphodiester linkage between the phosphate and headgroup of certain phospholipids (sphingolipid and lysolipid substrates), forming an alcohol (often choline) and a cyclic phosphate. This toxin acts on sphingomyelin (SM). It may also act on ceramide phosphoethanolamine (CPE), lysophosphatidylcholine (LPC) and lysophosphatidylethanolamine (LPE), but not on lysophosphatidylserine (LPS), and lysophosphatidylglycerol (LPG). It acts by transphosphatidylation, releasing exclusively cyclic phosphate products as second products. Induces dermonecrosis, hemolysis, increased vascular permeability, edema, inflammatory response, and platelet aggregation. In Loxosceles hirsuta (Recluse spider), this protein is Dermonecrotic toxin LhSicTox-alphaIA2ai.